Consider the following 187-residue polypeptide: Large ribosomal subunit protein mL49 (187 aa).

The protein belongs to the mitochondrion-specific ribosomal protein mL49 family.

It is found in the mitochondrion. This is Large ribosomal subunit protein mL49 (mrpl-49) from Caenorhabditis elegans.